The primary structure comprises 480 residues: Phenolic acid decarboxylase (480 aa).

3 residues coordinate Mn(2+): Asn163, His185, and Glu227. Prenylated FMN is bound by residues 163–168 (NVGTYR) and 184–185 (MH). Glu278 functions as the Proton donor in the catalytic mechanism. Residues 443 to 466 (TTPVPPEPNPRETQLLDPPDGTEE) are disordered.

It belongs to the UbiD family. YclC subfamily. In terms of assembly, homohexamer. It depends on prenylated FMN as a cofactor. Mn(2+) serves as cofactor.

It carries out the reaction 4-hydroxybenzoate + H(+) = phenol + CO2. The enzyme catalyses 3,4-dihydroxybenzoate + H(+) = catechol + CO2. Its activity is regulated as follows. Inhibited by Zn(2+), (2,3,4)-trihydroxybenzoate and (3,4,5)-trihydroxybenzoate. Ammonium and rubidium ions decrease the activity of the carboxylation of 3,4-dihydroxybenzoate by about 20%. Functionally, involved in the non-oxidative decarboxylation and detoxification of phenolic derivatives under anaerobic conditions. Oxygen-sensitive phenolic acid decarboxylase that catalyzes the reversible decarboxylation of 4-hydroxybenzoate and 3,4-dihydroxybenzoate. The protein is Phenolic acid decarboxylase of Sedimentibacter hydroxybenzoicus (Clostridium hydroxybenzoicum).